A 296-amino-acid polypeptide reads, in one-letter code: Glycine N-acyltransferase (296 aa).

3 positions are modified to N6-acetyllysine; alternate: Lys16, Lys127, and Lys141. N6-succinyllysine; alternate is present on residues Lys16, Lys127, and Lys141. Position 159 is an N6-acetyllysine (Lys159). Position 169 is an N6-succinyllysine (Lys169). An N6-acetyllysine; alternate mark is found at Lys183 and Lys256. An N6-succinyllysine; alternate mark is found at Lys183 and Lys256.

It belongs to the glycine N-acyltransferase family. Predominantly expressed in liver (at protein level) and kidney. Down-regulated in hepatocellular carcinoma and other liver cancers.

The protein resides in the mitochondrion. It carries out the reaction an acyl-CoA + glycine = an N-acylglycine + CoA + H(+). It catalyses the reaction benzoyl-CoA + glycine = N-benzoylglycine + CoA + H(+). Its function is as follows. Mitochondrial acyltransferase which transfers an acyl group to the N-terminus of glycine and glutamine, although much less efficiently. Can conjugate numerous substrates to form a variety of N-acylglycines, with a preference for benzoyl-CoA over phenylacetyl-CoA as acyl donors. Thereby detoxify xenobiotics, such as benzoic acid or salicylic acid, and endogenous organic acids, such as isovaleric acid. The chain is Glycine N-acyltransferase (GLYAT) from Homo sapiens (Human).